The primary structure comprises 204 residues: Glutathione S-transferase (204 aa).

A GST N-terminal domain is found at 3-80; that stretch reads PSYKLTYCPV…YLGKQFGLSG (78 aa). Glutathione is bound by residues Tyr9, Trp40, Lys44, 50 to 52, and 64 to 65; these read GKT and QS. The region spanning 82–204 is the GST C-terminal domain; the sequence is DDWENLEIDM…WVAKRPPTDL (123 aa).

This sequence belongs to the GST superfamily. Sigma family.

The catalysed reaction is RX + glutathione = an S-substituted glutathione + a halide anion + H(+). The sequence is that of Glutathione S-transferase from Blattella germanica (German cockroach).